We begin with the raw amino-acid sequence, 190 residues long: Cancer-related nucleoside-triphosphatase (190 aa).

A2 carries the N-acetylalanine modification. ATP is bound by residues 9 to 16 (GPPGVGKT) and 109 to 116 (VCVIDEIG). K165 carries the N6-acetyllysine modification.

The protein belongs to the THEP1 NTPase family. In terms of assembly, monomer.

The enzyme catalyses a ribonucleoside 5'-triphosphate + H2O = a ribonucleoside 5'-diphosphate + phosphate + H(+). It carries out the reaction 5-methyl-UTP + H2O = 5-methyl-UDP + phosphate + H(+). It catalyses the reaction CTP + H2O = CDP + phosphate + H(+). The catalysed reaction is ATP + H2O = ADP + phosphate + H(+). The enzyme catalyses GTP + H2O = GDP + phosphate + H(+). Functionally, has nucleotide phosphatase activity towards ATP, GTP, CTP, TTP and UTP. Hydrolyzes nucleoside diphosphates with lower efficiency. The chain is Cancer-related nucleoside-triphosphatase from Homo sapiens (Human).